We begin with the raw amino-acid sequence, 600 residues long: Elongation factor 4 (600 aa).

The tr-type G domain occupies lysine 4–lysine 186. Residues aspartate 16–threonine 21 and asparagine 133–aspartate 136 contribute to the GTP site.

It belongs to the TRAFAC class translation factor GTPase superfamily. Classic translation factor GTPase family. LepA subfamily.

It localises to the cell inner membrane. It catalyses the reaction GTP + H2O = GDP + phosphate + H(+). Its function is as follows. Required for accurate and efficient protein synthesis under certain stress conditions. May act as a fidelity factor of the translation reaction, by catalyzing a one-codon backward translocation of tRNAs on improperly translocated ribosomes. Back-translocation proceeds from a post-translocation (POST) complex to a pre-translocation (PRE) complex, thus giving elongation factor G a second chance to translocate the tRNAs correctly. Binds to ribosomes in a GTP-dependent manner. In Aquifex aeolicus (strain VF5), this protein is Elongation factor 4.